The sequence spans 425 residues: MDKLVINGGHRLTGSVAASGSKNSALPLIAATLLCDNGTCRLERIPDLKDTRTFQELLAYLGADISYSGSRLSVSTQNLRAIQAPYELVKKMRASIYVLGPLLARFGRAEVSLPGGCAFGPRPIDLHLMAMEKLGASISIKNGYIEASIAKGRLTGGHIEFPVSSVGATGNALMAASLAEGTTTITNASIEPEITALCDFLMAMGADIKGAGTTALTIEGVPSLHPVAFTNIFDRIEAGTLLAAAAITKGTISITGIDHTHMGAVLKKFKQAGCRITIDDDSLTLQSPDRLEPTDIIASPYPFFPTDMQAQWIALMTQANGSSRIIDKVYHERFNHIPELNRLGAKIEINNNEAIVHGPQLLTGTTVMSTDLRASACLVLAGLVAQGTTEVLRVYHLDRGYEKIEEKLRHLGADIQRENYQEFST.

Phosphoenolpyruvate is bound at residue 22–23; sequence KN. Position 93 (R93) interacts with UDP-N-acetyl-alpha-D-glucosamine. The Proton donor role is filled by C117. A 2-(S-cysteinyl)pyruvic acid O-phosphothioketal modification is found at C117. UDP-N-acetyl-alpha-D-glucosamine is bound by residues 122–126, D307, and V329; that span reads RPIDL.

The protein belongs to the EPSP synthase family. MurA subfamily.

It is found in the cytoplasm. The catalysed reaction is phosphoenolpyruvate + UDP-N-acetyl-alpha-D-glucosamine = UDP-N-acetyl-3-O-(1-carboxyvinyl)-alpha-D-glucosamine + phosphate. It functions in the pathway cell wall biogenesis; peptidoglycan biosynthesis. Its function is as follows. Cell wall formation. Adds enolpyruvyl to UDP-N-acetylglucosamine. This chain is UDP-N-acetylglucosamine 1-carboxyvinyltransferase, found in Prosthecochloris aestuarii (strain DSM 271 / SK 413).